The sequence spans 367 residues: ABI gene family member 3 (367 aa).

A coiled-coil region spans residues 36–64; it reads CEDNYLQATDKRKALEETMAFTTQALASV. The disordered stretch occupies residues 163–273; the sequence is LSRTGTLSRK…LEVSQPPLEA (111 aa). Over residues 206–225 the composition is skewed to low complexity; that stretch reads SAASSASSLASAGSAEGASG. Residues Ser216 and Ser219 each carry the phosphoserine modification. Residues 236–264 show a composition bias toward pro residues; it reads ATPPPPPVAPVTPPPPPLSAEVFLPPPPL. Residues 309 to 367 form the SH3 domain; that stretch reads SYLEKVVTLYPYTRQKDNELSFSEGTVICVTRRYSDGWCEGVSSEGTGFFPGNYVEPSC. Ser343 carries the post-translational modification Phosphoserine.

It belongs to the ABI family. As to quaternary structure, may interact with PAK1 and PAK2. Probably interacts with TARSH.

The protein localises to the cytoplasm. Its function is as follows. Inhibits ectopic tumor cell metastasis of SRD cells. In vitro, reduces cell motility. The chain is ABI gene family member 3 (Abi3) from Mus musculus (Mouse).